We begin with the raw amino-acid sequence, 242 residues long: ATP synthase subunit a (242 aa).

6 helical membrane passes run 29–49 (SAAYMLLASVLALTYFYLAFS), 84–104 (FVPVIFTLFVFILFCNLFGMI), 114–134 (IIITFALAILVFLMVTIVGFV), 140–160 (FLSLFLPHGTPLWLAPLMIII), 189–209 (VIASFVVTLMIYLKFLPIPLM), and 210–230 (VILIGFEIFVAILQAYIFTIL).

It belongs to the ATPase A chain family. As to quaternary structure, F-type ATPases have 2 components, CF(1) - the catalytic core - and CF(0) - the membrane proton channel. CF(1) has five subunits: alpha(3), beta(3), gamma(1), delta(1), epsilon(1). CF(0) has three main subunits: a(1), b(2) and c(9-12). The alpha and beta chains form an alternating ring which encloses part of the gamma chain. CF(1) is attached to CF(0) by a central stalk formed by the gamma and epsilon chains, while a peripheral stalk is formed by the delta and b chains.

The protein resides in the cell inner membrane. Functionally, key component of the proton channel; it plays a direct role in the translocation of protons across the membrane. This Rickettsia bellii (strain RML369-C) protein is ATP synthase subunit a.